A 288-amino-acid polypeptide reads, in one-letter code: NAD kinase (288 aa).

The Proton acceptor role is filled by Asp73. NAD(+) is bound by residues 73 to 74 (DG), Arg78, 144 to 145 (NE), Asp174, 185 to 190 (TAYSLS), and Ala209.

It belongs to the NAD kinase family. A divalent metal cation serves as cofactor.

The protein resides in the cytoplasm. It carries out the reaction NAD(+) + ATP = ADP + NADP(+) + H(+). Involved in the regulation of the intracellular balance of NAD and NADP, and is a key enzyme in the biosynthesis of NADP. Catalyzes specifically the phosphorylation on 2'-hydroxyl of the adenosine moiety of NAD to yield NADP. The sequence is that of NAD kinase from Porphyromonas gingivalis (strain ATCC BAA-308 / W83).